Consider the following 446-residue polypeptide: Tubulin beta chain (446 aa).

Glutamine 11, glutamate 69, serine 138, glycine 142, threonine 143, glycine 144, asparagine 204, and asparagine 226 together coordinate GTP. Glutamate 69 serves as a coordination point for Mg(2+). Residues 427 to 446 (EAGVDEGEEFEEEEDFGDEQ) are disordered. The segment covering 429-446 (GVDEGEEFEEEEDFGDEQ) has biased composition (acidic residues).

This sequence belongs to the tubulin family. As to quaternary structure, dimer of alpha and beta chains. A typical microtubule is a hollow water-filled tube with an outer diameter of 25 nm and an inner diameter of 15 nM. Alpha-beta heterodimers associate head-to-tail to form protofilaments running lengthwise along the microtubule wall with the beta-tubulin subunit facing the microtubule plus end conferring a structural polarity. Microtubules usually have 13 protofilaments but different protofilament numbers can be found in some organisms and specialized cells. It depends on Mg(2+) as a cofactor.

Its subcellular location is the cytoplasm. It is found in the cytoskeleton. In terms of biological role, tubulin is the major constituent of microtubules, a cylinder consisting of laterally associated linear protofilaments composed of alpha- and beta-tubulin heterodimers. Microtubules grow by the addition of GTP-tubulin dimers to the microtubule end, where a stabilizing cap forms. Below the cap, tubulin dimers are in GDP-bound state, owing to GTPase activity of alpha-tubulin. This is Tubulin beta chain from Giardia intestinalis (Giardia lamblia).